Reading from the N-terminus, the 763-residue chain is Photosystem I P700 chlorophyll a apoprotein A1 (763 aa).

8 consecutive transmembrane segments (helical) span residues 72–95 (IFSA…FHGA), 158–181 (LYVT…FHYH), 197–221 (LNHH…HVSL), 305–323 (TAHH…GHMY), 360–383 (WHAQ…HHMY), 399–425 (LSLF…IFMV), 447–469 (AIIS…LYIH), and 544–562 (FMVH…LILL). Residues cysteine 586 and cysteine 595 each coordinate [4Fe-4S] cluster. 2 helical membrane-spanning segments follow: residues 602–623 (HVFL…HYSW) and 677–699 (TSAY…MFLF). Position 688 (histidine 688) interacts with chlorophyll a'. Residues methionine 696 and tyrosine 704 each contribute to the chlorophyll a site. A phylloquinone-binding site is contributed by tryptophan 705. Residues 737–757 (AVGVAHYLLGGIVTTWSFFLA) form a helical membrane-spanning segment.

This sequence belongs to the PsaA/PsaB family. The PsaA/B heterodimer binds the P700 chlorophyll special pair and subsequent electron acceptors. PSI consists of a core antenna complex that captures photons, and an electron transfer chain that converts photonic excitation into a charge separation. The cyanobacterial PSI reaction center is composed of one copy each of PsaA,B,C,D,E,F,I,J,K,L,M and X, and forms trimeric complexes. PSI electron transfer chain: 5 chlorophyll a, 1 chlorophyll a', 2 phylloquinones and 3 4Fe-4S clusters. PSI core antenna: 90 chlorophyll a, 22 carotenoids, 3 phospholipids and 1 galactolipid. P700 is a chlorophyll a/chlorophyll a' dimer, A0 is one or more chlorophyll a, A1 is one or both phylloquinones and FX is a shared 4Fe-4S iron-sulfur center. is required as a cofactor.

The protein resides in the cellular thylakoid membrane. It catalyses the reaction reduced [plastocyanin] + hnu + oxidized [2Fe-2S]-[ferredoxin] = oxidized [plastocyanin] + reduced [2Fe-2S]-[ferredoxin]. In terms of biological role, psaA and PsaB bind P700, the primary electron donor of photosystem I (PSI), as well as the electron acceptors A0, A1 and FX. PSI is a plastocyanin/cytochrome c6-ferredoxin oxidoreductase, converting photonic excitation into a charge separation, which transfers an electron from the donor P700 chlorophyll pair to the spectroscopically characterized acceptors A0, A1, FX, FA and FB in turn. Oxidized P700 is reduced on the lumenal side of the thylakoid membrane by plastocyanin or cytochrome c6. The polypeptide is Photosystem I P700 chlorophyll a apoprotein A1 (Synechococcus elongatus (strain ATCC 33912 / PCC 7942 / FACHB-805) (Anacystis nidulans R2)).